Here is a 188-residue protein sequence, read N- to C-terminus: Elongation factor P-like protein (188 aa).

It belongs to the elongation factor P family.

This Aliivibrio fischeri (strain MJ11) (Vibrio fischeri) protein is Elongation factor P-like protein.